We begin with the raw amino-acid sequence, 463 residues long: L-cystine uptake protein TcyP (463 aa).

The next 10 helical transmembrane spans lie at 3–23, 34–54, 73–93, 105–125, 184–204, 225–245, 262–282, 338–358, 369–389, and 394–414; these read TLLVVLHVFILFLLILGLFVM, VFTALGLGIVFGFALQLIYGP, YVKLLQMVVMPLVFISILGAF, ISGLIIGILVATTAVAAAVGI, PTSTIAVVIFAAFLGVAFLGV, IVMRVVTLILRLTPYGVLAIM, MFVIASYAALITMFIIHLLLL, LSIGQNGCAGIYPAMLAMMIA, VFIITVIAVVAISSFGVAGVG, and FAALLVLSSLNMPVALAGLLI.

Belongs to the dicarboxylate/amino acid:cation symporter (DAACS) (TC 2.A.23) family.

The protein resides in the cell membrane. Mediates uptake of L-cystine, the oxidized form of L-cysteine. Although it is more specific for L-cystine, it could also transport a much broader range of amino acids and sulfur compounds including S-methylcysteine. The polypeptide is L-cystine uptake protein TcyP (tcyP) (Bacillus subtilis (strain 168)).